Reading from the N-terminus, the 291-residue chain is 33 kDa chaperonin (291 aa).

Cystine bridges form between Cys-237–Cys-239 and Cys-270–Cys-273.

This sequence belongs to the HSP33 family. Post-translationally, under oxidizing conditions two disulfide bonds are formed involving the reactive cysteines. Under reducing conditions zinc is bound to the reactive cysteines and the protein is inactive.

The protein resides in the cytoplasm. Redox regulated molecular chaperone. Protects both thermally unfolding and oxidatively damaged proteins from irreversible aggregation. Plays an important role in the bacterial defense system toward oxidative stress. The polypeptide is 33 kDa chaperonin (Clostridioides difficile (strain 630) (Peptoclostridium difficile)).